Consider the following 296-residue polypeptide: Aspartate and glycine-rich protein (296 aa).

Residues 1–77 (GDGENGNGNG…GNGNGNGNGN (77 aa)) are compositionally biased toward gly residues. Disordered regions lie at residues 1–219 (GDGE…DNGG) and 233–296 (RARA…YTSY). 2 stretches are compositionally biased toward acidic residues: residues 80-96 (FDDDDWDDFDWDDDDWN) and 103-194 (NGDD…DDRW). A compositionally biased stretch (gly residues) spans 198–210 (NGNGNGNGNGNGN). Residues 233–243 (RARAAASAAGR) show a composition bias toward low complexity. Gly residues predominate over residues 244 to 259 (SRGGSGGSGGSGGSGG). Positions 270-281 (RAFASARASSGN) are enriched in low complexity.

As to expression, component of the acid-soluble and acid-insoluble organic matrix of calcified shell layers (at protein level).

The protein resides in the secreted. In Haliotis asinina (Donkey's ear abalone), this protein is Aspartate and glycine-rich protein.